Reading from the N-terminus, the 168-residue chain is Photosystem I assembly protein Ycf3 (168 aa).

TPR repeat units follow at residues 35 to 68 (AFTY…EIDP), 72 to 105 (SYIL…NPFL), and 120 to 153 (GEQA…TPGN).

It belongs to the Ycf3 family.

Its subcellular location is the plastid. The protein localises to the chloroplast thylakoid membrane. Its function is as follows. Essential for the assembly of the photosystem I (PSI) complex. May act as a chaperone-like factor to guide the assembly of the PSI subunits. The sequence is that of Photosystem I assembly protein Ycf3 from Populus alba (White poplar).